Consider the following 119-residue polypeptide: Large ribosomal subunit protein uL22 (119 aa).

The protein belongs to the universal ribosomal protein uL22 family. As to quaternary structure, part of the 50S ribosomal subunit.

This protein binds specifically to 23S rRNA; its binding is stimulated by other ribosomal proteins, e.g. L4, L17, and L20. It is important during the early stages of 50S assembly. It makes multiple contacts with different domains of the 23S rRNA in the assembled 50S subunit and ribosome. In terms of biological role, the globular domain of the protein is located near the polypeptide exit tunnel on the outside of the subunit, while an extended beta-hairpin is found that lines the wall of the exit tunnel in the center of the 70S ribosome. The polypeptide is Large ribosomal subunit protein uL22 (Rickettsia prowazekii (strain Madrid E)).